The sequence spans 435 residues: Gamma-glutamyl phosphate reductase (435 aa).

The protein belongs to the gamma-glutamyl phosphate reductase family.

It is found in the cytoplasm. It carries out the reaction L-glutamate 5-semialdehyde + phosphate + NADP(+) = L-glutamyl 5-phosphate + NADPH + H(+). The protein operates within amino-acid biosynthesis; L-proline biosynthesis; L-glutamate 5-semialdehyde from L-glutamate: step 2/2. Catalyzes the NADPH-dependent reduction of L-glutamate 5-phosphate into L-glutamate 5-semialdehyde and phosphate. The product spontaneously undergoes cyclization to form 1-pyrroline-5-carboxylate. The sequence is that of Gamma-glutamyl phosphate reductase from Bradyrhizobium diazoefficiens (strain JCM 10833 / BCRC 13528 / IAM 13628 / NBRC 14792 / USDA 110).